The sequence spans 462 residues: Phosphoglucosamine mutase (462 aa).

Residue serine 112 is the Phosphoserine intermediate of the active site. Residues serine 112, aspartate 250, aspartate 252, and aspartate 254 each coordinate Mg(2+). Serine 112 is modified (phosphoserine).

It belongs to the phosphohexose mutase family. Requires Mg(2+) as cofactor. In terms of processing, activated by phosphorylation.

The catalysed reaction is alpha-D-glucosamine 1-phosphate = D-glucosamine 6-phosphate. In terms of biological role, catalyzes the conversion of glucosamine-6-phosphate to glucosamine-1-phosphate. This is Phosphoglucosamine mutase from Parasynechococcus marenigrum (strain WH8102).